The chain runs to 100 residues: NADH-quinone oxidoreductase subunit K (100 aa).

3 consecutive transmembrane segments (helical) span residues 4 to 24, 28 to 48, and 60 to 80; these read LQHG…GLLV, LLFM…AFIV, and VMYI…LALL.

Belongs to the complex I subunit 4L family. In terms of assembly, NDH-1 is composed of 13 different subunits. Subunits NuoA, H, J, K, L, M, N constitute the membrane sector of the complex.

It localises to the cell inner membrane. The catalysed reaction is a quinone + NADH + 5 H(+)(in) = a quinol + NAD(+) + 4 H(+)(out). Its function is as follows. NDH-1 shuttles electrons from NADH, via FMN and iron-sulfur (Fe-S) centers, to quinones in the respiratory chain. The immediate electron acceptor for the enzyme in this species is believed to be ubiquinone. Couples the redox reaction to proton translocation (for every two electrons transferred, four hydrogen ions are translocated across the cytoplasmic membrane), and thus conserves the redox energy in a proton gradient. The protein is NADH-quinone oxidoreductase subunit K of Serratia proteamaculans (strain 568).